The primary structure comprises 92 residues: uncharacterized protein (92 aa).

Positions 25-53 (AGRGVRREARDTPCRGTAEGLATSQPEDG) are disordered.

This is an uncharacterized protein from Treponema pallidum (strain Nichols).